The primary structure comprises 417 residues: uncharacterized protein (417 aa).

Disordered stretches follow at residues 1 to 41 (MDSE…EDQA) and 233 to 262 (QDSAYNDQAPSTSYHHHHHEQLEAGKSTRS). Positions 31–41 (DEDHIFHEDQA) are enriched in basic and acidic residues. Residues 235-245 (SAYNDQAPSTS) show a composition bias toward polar residues.

This is an uncharacterized protein from Caenorhabditis elegans.